A 218-amino-acid polypeptide reads, in one-letter code: MAGKEEIIAKAKNSITEFDEELAAEVAEEALAAGVDPVELIEKGFTAGMEEVGEQFGQGALFLPHVLAAAEAMKAGIEVITPEMEKRKSQTKNLGTVIIGTIEGDIHSIGKDIVASMLNIAGFKVVDLGRDVAIKTFVEKVKELKPQVVASSALMTTTMVNQIQIEEQLKEAGVRDQVKTMVGGAPVTQDWADKIGADIYGESANDAVAKVKAALKVG.

One can recognise a B12-binding N-terminal domain in the interval 1–92; sequence MAGKEEIIAK…EMEKRKSQTK (92 aa). The 125-residue stretch at 94–218 folds into the B12-binding domain; sequence LGTVIIGTIE…AKVKAALKVG (125 aa). His-107 serves as a coordination point for methylcob(III)alamin.

This sequence belongs to the methylamine corrinoid protein family. In terms of assembly, can form a complex with MttB.

It functions in the pathway one-carbon metabolism; methanogenesis from trimethylamine. In terms of biological role, acts probably as a methyl group carrier between MttB and either MtbA or MtaA. The sequence is that of Trimethylamine corrinoid protein 2 (mttC2) from Methanosarcina mazei (strain ATCC BAA-159 / DSM 3647 / Goe1 / Go1 / JCM 11833 / OCM 88) (Methanosarcina frisia).